A 362-amino-acid chain; its full sequence is Aminomethyltransferase (362 aa).

It belongs to the GcvT family. The glycine cleavage system is composed of four proteins: P, T, L and H.

It catalyses the reaction N(6)-[(R)-S(8)-aminomethyldihydrolipoyl]-L-lysyl-[protein] + (6S)-5,6,7,8-tetrahydrofolate = N(6)-[(R)-dihydrolipoyl]-L-lysyl-[protein] + (6R)-5,10-methylene-5,6,7,8-tetrahydrofolate + NH4(+). Functionally, the glycine cleavage system catalyzes the degradation of glycine. In Bacillus subtilis (strain 168), this protein is Aminomethyltransferase.